Here is a 273-residue protein sequence, read N- to C-terminus: 2,3,4,5-tetrahydropyridine-2,6-dicarboxylate N-succinyltransferase (273 aa).

Residues Arg-104 and Asp-141 each coordinate substrate.

It belongs to the transferase hexapeptide repeat family. Homotrimer.

Its subcellular location is the cytoplasm. It catalyses the reaction (S)-2,3,4,5-tetrahydrodipicolinate + succinyl-CoA + H2O = (S)-2-succinylamino-6-oxoheptanedioate + CoA. It participates in amino-acid biosynthesis; L-lysine biosynthesis via DAP pathway; LL-2,6-diaminopimelate from (S)-tetrahydrodipicolinate (succinylase route): step 1/3. The chain is 2,3,4,5-tetrahydropyridine-2,6-dicarboxylate N-succinyltransferase from Neisseria gonorrhoeae (strain ATCC 700825 / FA 1090).